The sequence spans 439 residues: MLDKTKQIWFIGIKGTGMASLALILHDLGYKVAGSDIDKYTFTQDPLEAAGIEVASFSKDNIKESGQVIVKGNAFKSDNIEVAACEEKGVKWQSYPDTVEEIVQQYTSIGVAGSHGKTSTTGLLATVLGEAAPTSFLIGDGMGKGVKDSRFFVYEADEYRRHFLAYHPDYQIMTNVDFDHPDYFKDRDDYASAFQTAADQTKKGLFVWGDDERLQKIHPKTAKKYTYGLKDSDDFQAFDVVKTTEGAKFHVRANGEDLGEFTIHLFGDHNVMNATAVIAIAFTEGIDLDVVRKGLVKYTGAKRRFSEKDFGDTVVIDDYAHHPTELRATIQAARQKFPDRKLVTIFQPHTYSRTKEFEEEYVEILKGVDKAFLTPIYGSAREAAGDIKSEDIASQIPGAEVIDFDNLKDLLAYKGDCIVFMGAGDIPKYEVAFEEMLGK.

113 to 119 (GSHGKTS) is a binding site for ATP.

This sequence belongs to the MurCDEF family.

It is found in the cytoplasm. It catalyses the reaction UDP-N-acetyl-alpha-D-muramate + L-alanine + ATP = UDP-N-acetyl-alpha-D-muramoyl-L-alanine + ADP + phosphate + H(+). It participates in cell wall biogenesis; peptidoglycan biosynthesis. Cell wall formation. In Lactobacillus delbrueckii subsp. bulgaricus (strain ATCC 11842 / DSM 20081 / BCRC 10696 / JCM 1002 / NBRC 13953 / NCIMB 11778 / NCTC 12712 / WDCM 00102 / Lb 14), this protein is UDP-N-acetylmuramate--L-alanine ligase.